Reading from the N-terminus, the 426-residue chain is Glutamate-1-semialdehyde 2,1-aminomutase (426 aa).

Lys265 is modified (N6-(pyridoxal phosphate)lysine).

It belongs to the class-III pyridoxal-phosphate-dependent aminotransferase family. HemL subfamily. Homodimer. It depends on pyridoxal 5'-phosphate as a cofactor.

The protein resides in the cytoplasm. The enzyme catalyses (S)-4-amino-5-oxopentanoate = 5-aminolevulinate. Its pathway is porphyrin-containing compound metabolism; protoporphyrin-IX biosynthesis; 5-aminolevulinate from L-glutamyl-tRNA(Glu): step 2/2. This is Glutamate-1-semialdehyde 2,1-aminomutase from Shigella boydii serotype 4 (strain Sb227).